The following is a 322-amino-acid chain: Quinolinate synthase (322 aa).

Iminosuccinate-binding residues include His-37 and Ser-54. Residue Cys-99 coordinates [4Fe-4S] cluster. Residues 125–127 (YVN) and Ser-142 each bind iminosuccinate. Cys-185 lines the [4Fe-4S] cluster pocket. Residues 211-213 (HPE) and Thr-228 contribute to the iminosuccinate site. Cys-278 is a [4Fe-4S] cluster binding site.

It belongs to the quinolinate synthase family. Type 2 subfamily. [4Fe-4S] cluster serves as cofactor.

The protein localises to the cytoplasm. The catalysed reaction is iminosuccinate + dihydroxyacetone phosphate = quinolinate + phosphate + 2 H2O + H(+). Its pathway is cofactor biosynthesis; NAD(+) biosynthesis; quinolinate from iminoaspartate: step 1/1. Its function is as follows. Catalyzes the condensation of iminoaspartate with dihydroxyacetone phosphate to form quinolinate. This is Quinolinate synthase from Chlorobaculum tepidum (strain ATCC 49652 / DSM 12025 / NBRC 103806 / TLS) (Chlorobium tepidum).